Reading from the N-terminus, the 87-residue chain is UPF0367 protein SynWH7803_2240 (87 aa).

It belongs to the UPF0367 family.

The sequence is that of UPF0367 protein SynWH7803_2240 from Synechococcus sp. (strain WH7803).